A 371-amino-acid chain; its full sequence is DNA replication and repair protein RecF (371 aa).

30–37 (GSNGQGKT) is a binding site for ATP.

This sequence belongs to the RecF family.

The protein localises to the cytoplasm. The RecF protein is involved in DNA metabolism; it is required for DNA replication and normal SOS inducibility. RecF binds preferentially to single-stranded, linear DNA. It also seems to bind ATP. The protein is DNA replication and repair protein RecF of Acidothermus cellulolyticus (strain ATCC 43068 / DSM 8971 / 11B).